A 90-amino-acid polypeptide reads, in one-letter code: MAHKKAGGSTRNGRDSNPKMLGVKRFGGERVLAGNIIVRQRGTHYRPGENMGMGRDHTLYALIEGKVKFIRKGPKKRNFVSIEPLEESQP.

The tract at residues 1 to 22 (MAHKKAGGSTRNGRDSNPKMLG) is disordered.

Belongs to the bacterial ribosomal protein bL27 family.

The protein is Large ribosomal subunit protein bL27 of Coxiella burnetii (strain Dugway 5J108-111).